An 80-amino-acid polypeptide reads, in one-letter code: Cell division activator CedA (80 aa).

The protein belongs to the CedA family.

In terms of biological role, activates the cell division inhibited by chromosomal DNA over-replication. The sequence is that of Cell division activator CedA from Citrobacter koseri (strain ATCC BAA-895 / CDC 4225-83 / SGSC4696).